A 190-amino-acid polypeptide reads, in one-letter code: NADH-quinone oxidoreductase subunit B (190 aa).

The [4Fe-4S] cluster site is built by Cys-39, Cys-40, Cys-104, and Cys-135.

The protein belongs to the complex I 20 kDa subunit family. In terms of assembly, NDH-1 is composed of 14 different subunits. Subunits NuoB, C, D, E, F, and G constitute the peripheral sector of the complex. The cofactor is [4Fe-4S] cluster.

The protein resides in the cell inner membrane. It carries out the reaction a quinone + NADH + 5 H(+)(in) = a quinol + NAD(+) + 4 H(+)(out). In terms of biological role, NDH-1 shuttles electrons from NADH, via FMN and iron-sulfur (Fe-S) centers, to quinones in the respiratory chain. The immediate electron acceptor for the enzyme in this species is believed to be a menaquinone. Couples the redox reaction to proton translocation (for every two electrons transferred, four hydrogen ions are translocated across the cytoplasmic membrane), and thus conserves the redox energy in a proton gradient. This Chlorobium phaeobacteroides (strain BS1) protein is NADH-quinone oxidoreductase subunit B.